The sequence spans 588 residues: Synaptotagmin-3 (588 aa).

Residues 1-54 are Vesicular-facing; sequence MSGDYEDDLCRRALILVSDLCARIRDADTNDRCQEFNELRIRGYPRGPDADISV. The cysteine motif stretch occupies residues 10–34; the sequence is CRRALILVSDLCARIRDADTNDRCQ. A helical membrane pass occupies residues 55-75; it reads SLLSVIVTFCGIVLLGVSLFV. Residues 76–588 lie on the Cytoplasmic side of the membrane; that stretch reads SWKLCWVPWR…KGLSEKENSE (513 aa). Disordered regions lie at residues 129 to 161, 183 to 222, and 238 to 257; these read GGPHHHAHPAHHPPFAELLEPGGLGGSEPPEPS, PSQTSPELPSEGGTGSGLLLLPPSGGGLPSAQSHQQVTSL, and QTLTTQADPSSEERPPALPL. Residues 183–205 show a composition bias toward low complexity; that stretch reads PSQTSPELPSEGGTGSGLLLLPP. Positions 213-222 are enriched in polar residues; sequence AQSHQQVTSL. R286 carries the omega-N-methylarginine modification. C2 domains are found at residues 297 to 418 and 429 to 563; these read PCGR…PLWR and DLGE…EHWH. Ca(2+) is bound by residues D328, D334, D386, F387, D388, S391, D394, D460, D466, D520, and D522.

The protein belongs to the synaptotagmin family. In terms of assembly, homodimer; disulfide-linked via the cysteine motif. Can also form heterodimers with SYT6, SYT9 and SYT10. Requires Ca(2+) as cofactor. As to expression, brain, various endocrine tissues and hormone-secreting clonal cells.

Its subcellular location is the cell membrane. It is found in the cytoplasmic vesicle. The protein resides in the secretory vesicle membrane. In terms of biological role, ca(2+) sensor involved in Ca(2+)-dependent exocytosis of secretory vesicles through Ca(2+) and phospholipid binding to the C2 domain. Ca(2+) induces binding of the C2-domains to phospholipid membranes and to assembled SNARE-complexes; both actions contribute to triggering exocytosis. Plays a role in dendrite formation by melanocytes. The chain is Synaptotagmin-3 (Syt3) from Rattus norvegicus (Rat).